The following is a 259-amino-acid chain: Phosphoribosylaminoimidazole-succinocarboxamide synthase (259 aa).

Belongs to the SAICAR synthetase family.

The catalysed reaction is 5-amino-1-(5-phospho-D-ribosyl)imidazole-4-carboxylate + L-aspartate + ATP = (2S)-2-[5-amino-1-(5-phospho-beta-D-ribosyl)imidazole-4-carboxamido]succinate + ADP + phosphate + 2 H(+). It functions in the pathway purine metabolism; IMP biosynthesis via de novo pathway; 5-amino-1-(5-phospho-D-ribosyl)imidazole-4-carboxamide from 5-amino-1-(5-phospho-D-ribosyl)imidazole-4-carboxylate: step 1/2. This chain is Phosphoribosylaminoimidazole-succinocarboxamide synthase, found in Zymomonas mobilis subsp. mobilis (strain ATCC 31821 / ZM4 / CP4).